The chain runs to 403 residues: Signal-transducing adaptor protein 2 (403 aa).

Positions 18 to 130 (PSHYYESFLE…VPTDLTLLPG (113 aa)) constitute a PH domain. Residue Tyr22 is modified to Phosphotyrosine; by SRC. Residues 133–248 (YMMSEVLAKE…KALVPFLLDE (116 aa)) enclose the SH2 domain. Tyr250 carries the post-translational modification Phosphotyrosine; by PTK6. The disordered stretch occupies residues 270–308 (APSAPGPGPAPCTGGPKPLSPASSQDKLPPLPPLPNQEE). Tyr310 bears the Phosphotyrosine mark. Tyr322 is modified (phosphotyrosine; by SRC). The tract at residues 331-374 (SWPVILKPKKLPKPPAKLPKPPVGPKPEPKVFNGGLGRKLPVSS) is disordered. Residues 343 to 356 (KPPAKLPKPPVGPK) are compositionally biased toward pro residues. Residues 382–402 (AGLADMTAELQKKLEKRRALE) adopt a coiled-coil conformation.

As to quaternary structure, interacts with PTK6 and CSF1R. Phosphorylated on tyrosine. Tyr-250 may be important for interaction with kinases. Phosphorylated by PTK6 at Tyr-250 modulates PTK6-mediated STAT3 activation. Tyr-22 and Tyr-322 appears to be phosphorylated by SRC. As to expression, widely expressed.

Its subcellular location is the cytoplasm. Functionally, substrate of protein kinase PTK6. May play a regulatory role in the acute-phase response in systemic inflammation and may modulate STAT3 activity. The polypeptide is Signal-transducing adaptor protein 2 (STAP2) (Homo sapiens (Human)).